The following is a 208-amino-acid chain: 3,4-dihydroxy-2-butanone 4-phosphate synthase (208 aa).

Thr3 is subject to Phosphothreonine. Glu27 serves as a coordination point for Mg(2+). Asp31 is a binding site for D-ribulose 5-phosphate. Position 56 is an S-glutathionyl cysteine; by GRX2 (Cys56). D-ribulose 5-phosphate is bound by residues Thr88 and 145-149 (RRGHT). His148 contributes to the Mg(2+) binding site.

The protein belongs to the DHBP synthase family. Homodimer. Mg(2+) serves as cofactor. The cofactor is Mn(2+). In terms of processing, S-glutathionylation of Cys-56 is reversible and dependent on the cytoplasmic isoform of glutaredoxin-2.

It localises to the cytoplasm. Its subcellular location is the nucleus. The protein resides in the mitochondrion intermembrane space. It carries out the reaction D-ribulose 5-phosphate = (2S)-2-hydroxy-3-oxobutyl phosphate + formate + H(+). The protein operates within cofactor biosynthesis; riboflavin biosynthesis; 2-hydroxy-3-oxobutyl phosphate from D-ribulose 5-phosphate: step 1/1. Its function is as follows. Catalyzes the conversion of D-ribulose 5-phosphate to formate and 3,4-dihydroxy-2-butanone 4-phosphate. Also has an unrelated function in expression of mitochondrial respiration. In Saccharomyces cerevisiae (strain ATCC 204508 / S288c) (Baker's yeast), this protein is 3,4-dihydroxy-2-butanone 4-phosphate synthase (RIB3).